The sequence spans 177 residues: MSRVAKAPVVIPAGVEVKLNGQDISIKGKNGELSRKIHDAVEVKQADNALTFAPREGFVDGWAQAGTTRALLNAMVIGVTEGFTKKLQLVGVGYRAAVKGNVVNLSLGFSHPVDHALPAGITAECPSQTEIVLKGADKQVIGQVAAELRAYRRPEPYKGKGVRYADEVVRTKEAKKK.

Belongs to the universal ribosomal protein uL6 family. In terms of assembly, part of the 50S ribosomal subunit.

This protein binds to the 23S rRNA, and is important in its secondary structure. It is located near the subunit interface in the base of the L7/L12 stalk, and near the tRNA binding site of the peptidyltransferase center. In Pectobacterium carotovorum subsp. carotovorum (strain PC1), this protein is Large ribosomal subunit protein uL6.